We begin with the raw amino-acid sequence, 1347 residues long: Protein dispatched homolog 3 (1347 aa).

Residues 1-67 (MDSEDDPLLQ…LGWAFTNPCC (67 aa)) lie on the Cytoplasmic side of the membrane. Residues 68–88 (AGLVLFLGCSIPMVLSAFMFL) form a helical membrane-spanning segment. Residues 89 to 417 (YYPPLDIDIS…YEVRRTFNND (329 aa)) lie on the Lumenal side of the membrane. Residues 156–207 (GNHSRPASRAPRSAPRDTVATQTSAANSSERRRREAPSPEGQVTNQSRARRG) are disordered. Asn157 carries an N-linked (GlcNAc...) asparagine glycan. Positions 159–168 (SRPASRAPRS) are enriched in low complexity. Positions 412-570 (RTFNNDMLLA…LFTMPAALGL (159 aa)) constitute an SSD domain. The helical transmembrane segment at 418-438 (MLLAFISSSCIAALVYILTSC) threads the bilayer. Ser439 is a topological domain (cytoplasmic). Residues 440 to 460 (VFLSFFGIASIGLSCLVALFL) form a helical membrane-spanning segment. At 461 to 463 (YHV) the chain is on the lumenal side. Residues 464–484 (VFGIQYLGILNGVAAFVIVGI) traverse the membrane as a helical segment. Residues 485-528 (GVDDVFVFINTYRQATHLEDPQLRMIHTIQTAGKATFFTSLTTA) are Cytoplasmic-facing. A helical transmembrane segment spans residues 529–549 (AAYAANVFSQIPAVHDFGLFM). Residue Ser550 is a topological domain, lumenal. A helical transmembrane segment spans residues 551 to 571 (LIVTCCWLAVLFTMPAALGLW). The Cytoplasmic portion of the chain corresponds to 572 to 684 (SLYMAPLESS…WVLWAAVKSR (113 aa)). The helical transmembrane segment at 685–705 (WVIVGLFASILILSLVFASRL) threads the bilayer. Topologically, residues 706–1137 (RPASRAPLLF…IFMEIIGVQS (432 aa)) are lumenal. The N-linked (GlcNAc...) asparagine glycan is linked to Asn976. Residues 1138–1158 (ALYGLVLSLLICVAAVAVFTT) form a helical membrane-spanning segment. Position 1159 (His1159) is a topological domain, cytoplasmic. Residues 1160 to 1180 (VLLLLPVLLSILGIVCLVVTI) traverse the membrane as a helical segment. Residues 1181-1246 (MYWSGWEMGA…TLEAVRHVGV (66 aa)) lie on the Lumenal side of the membrane. Residues 1247–1267 (AIVSSALTTVIATVPLFFCII) form a helical membrane-spanning segment. Residues 1268 to 1281 (APFAKFGKIVALNT) lie on the Cytoplasmic side of the membrane. The chain crosses the membrane as a helical span at residues 1282–1302 (GVSILYTLTVSTALLGIMAPG). Topologically, residues 1303-1310 (SFTRTRTS) are lumenal. A helical membrane pass occupies residues 1311-1331 (FLKALGAVLLAGALGLGACLV). The Cytoplasmic portion of the chain corresponds to 1332 to 1347 (LLRSGYKIPLPSGATL).

This sequence belongs to the patched family. Expressed in brain, retina, testis and thymus.

Its subcellular location is the endoplasmic reticulum membrane. The protein localises to the nucleus membrane. It is found in the cytoplasmic vesicle membrane. Its function is as follows. Plays a role in neuronal proliferation and differentiation. Plays a role in the accumulation of cellular cholesterol. Involved in intracellular lipid droplet formation. May contribute to cholesterol homeostasis in neuronal cells. The chain is Protein dispatched homolog 3 from Mus musculus (Mouse).